The primary structure comprises 185 residues: Peptidyl-tRNA hydrolase (185 aa).

Residue Tyr-14 coordinates tRNA. Catalysis depends on His-19, which acts as the Proton acceptor. 3 residues coordinate tRNA: Phe-64, Asn-66, and Asn-112.

Belongs to the PTH family. Monomer.

The protein resides in the cytoplasm. The enzyme catalyses an N-acyl-L-alpha-aminoacyl-tRNA + H2O = an N-acyl-L-amino acid + a tRNA + H(+). Hydrolyzes ribosome-free peptidyl-tRNAs (with 1 or more amino acids incorporated), which drop off the ribosome during protein synthesis, or as a result of ribosome stalling. Functionally, catalyzes the release of premature peptidyl moieties from peptidyl-tRNA molecules trapped in stalled 50S ribosomal subunits, and thus maintains levels of free tRNAs and 50S ribosomes. This chain is Peptidyl-tRNA hydrolase, found in Halalkalibacterium halodurans (strain ATCC BAA-125 / DSM 18197 / FERM 7344 / JCM 9153 / C-125) (Bacillus halodurans).